The following is a 276-amino-acid chain: Cruxhalorhodopsin-3 (276 aa).

Positions 1-21 are excised as a propeptide; that stretch reads MPAASTAATTLLQASQSEVLG. Over 22–25 the chain is Extracellular; that stretch reads EIQS. The chain crosses the membrane as a helical span at residues 26–51; it reads NFLLNSSLWVNIALAGVVILLFVAMG. Topologically, residues 52–57 are cytoplasmic; the sequence is RELESS. The chain crosses the membrane as a helical span at residues 58 to 81; it reads RAKLIWVATMLVPLVSISSYAGLA. The Extracellular portion of the chain corresponds to 82 to 105; the sequence is SGLTVGFLQMPPGHALAGQEVLSP. Residues 106 to 127 form a helical membrane-spanning segment; it reads WGRYLTWTFSTPMILLALGLLA. Residues 128 to 130 lie on the Cytoplasmic side of the membrane; sequence DTD. Residues 131–154 traverse the membrane as a helical segment; that stretch reads MASLFTAITMDIGMCITGLAAALV. Residues 155–157 are Extracellular-facing; that stretch reads TSS. Residues 158 to 180 form a helical membrane-spanning segment; the sequence is HLLRWVFYGISCAFFIAVLYVLL. Residues 181–192 are Cytoplasmic-facing; it reads VEWPADAEAAGT. The chain crosses the membrane as a helical span at residues 193–216; the sequence is SEIFGTLKLLTVVLWLGYPILWAL. Topologically, residues 217 to 225 are extracellular; it reads GSEGVALLS. A helical membrane pass occupies residues 226–254; it reads VGVTSWGYSGLDILAKYVFAFLLLRWVAA. At Lys-241 the chain carries N6-(retinylidene)lysine. The Cytoplasmic portion of the chain corresponds to 255-276; it reads NEDTVTQAGMSLGSGGAAPADD.

It belongs to the archaeal/bacterial/fungal opsin family.

The protein resides in the cell membrane. Its function is as follows. Light-driven chloride pump. The polypeptide is Cruxhalorhodopsin-3 (choP3) (Haloarcula vallismortis (Halobacterium vallismortis)).